The chain runs to 432 residues: Proline--tRNA ligase (432 aa).

The protein belongs to the class-II aminoacyl-tRNA synthetase family. ProS type 2 subfamily. In terms of assembly, homodimer.

The protein localises to the cytoplasm. The enzyme catalyses tRNA(Pro) + L-proline + ATP = L-prolyl-tRNA(Pro) + AMP + diphosphate. Catalyzes the attachment of proline to tRNA(Pro) in a two-step reaction: proline is first activated by ATP to form Pro-AMP and then transferred to the acceptor end of tRNA(Pro). This is Proline--tRNA ligase from Rickettsia prowazekii (strain Madrid E).